Consider the following 177-residue polypeptide: Inorganic pyrophosphatase (177 aa).

3 residues coordinate substrate: lysine 31, arginine 45, and tyrosine 57. Residues aspartate 67, aspartate 72, and aspartate 104 each contribute to the Mg(2+) site. A substrate-binding site is contributed by tyrosine 141.

This sequence belongs to the PPase family. As to quaternary structure, homohexamer. Also forms homotrimers, but the trimeric form is 23% less active than the hexamer. In fact, likely forms a dimer of trimers. Mg(2+) is required as a cofactor.

It localises to the cytoplasm. It catalyses the reaction diphosphate + H2O = 2 phosphate + H(+). Its activity is regulated as follows. Inhibited by sodium fluoride (NaF) in vitro, similarly to other class A type inorganic pyrophosphatases. Its function is as follows. Catalyzes the hydrolysis of inorganic pyrophosphate (PPi) forming two phosphate ions. The hydrolysis of PPi by inorganic pyrophosphatase releases a considerable amount of energy that can drive unfavorable biochemical transformations to completion. Is not active on nucleoside triphosphates (ATP, TTP, GTP, or CTP) or nucleoside diphosphate (ADP). The polypeptide is Inorganic pyrophosphatase (Haloferax volcanii (strain ATCC 29605 / DSM 3757 / JCM 8879 / NBRC 14742 / NCIMB 2012 / VKM B-1768 / DS2) (Halobacterium volcanii)).